Here is a 427-residue protein sequence, read N- to C-terminus: Tol-Pal system protein TolB (427 aa).

A signal peptide spans 1–25; it reads MKTFAQLRLLLAAAALALLSFSAQA.

This sequence belongs to the TolB family. The Tol-Pal system is composed of five core proteins: the inner membrane proteins TolA, TolQ and TolR, the periplasmic protein TolB and the outer membrane protein Pal. They form a network linking the inner and outer membranes and the peptidoglycan layer.

The protein resides in the periplasm. Functionally, part of the Tol-Pal system, which plays a role in outer membrane invagination during cell division and is important for maintaining outer membrane integrity. The chain is Tol-Pal system protein TolB from Azoarcus sp. (strain BH72).